Reading from the N-terminus, the 301-residue chain is Probable alpha-L-glutamate ligase (301 aa).

The 184-residue stretch at 104–287 (LQLLSRKGIG…VAGMIIQYLE (184 aa)) folds into the ATP-grasp domain. Residues Lys141, 178-179 (EY), Asp187, and 211-213 (RSN) contribute to the ATP site. The Mg(2+) site is built by Asp248, Glu260, and Asn262. Mn(2+) is bound by residues Asp248, Glu260, and Asn262.

The protein belongs to the RimK family. Requires Mg(2+) as cofactor. It depends on Mn(2+) as a cofactor.

The polypeptide is Probable alpha-L-glutamate ligase (Ectopseudomonas mendocina (strain ymp) (Pseudomonas mendocina)).